Consider the following 268-residue polypeptide: Ribosomal RNA small subunit methyltransferase A (268 aa).

Asn16, Leu18, Gly43, Glu64, Asp89, and Asn110 together coordinate S-adenosyl-L-methionine.

It belongs to the class I-like SAM-binding methyltransferase superfamily. rRNA adenine N(6)-methyltransferase family. RsmA subfamily.

It is found in the cytoplasm. The catalysed reaction is adenosine(1518)/adenosine(1519) in 16S rRNA + 4 S-adenosyl-L-methionine = N(6)-dimethyladenosine(1518)/N(6)-dimethyladenosine(1519) in 16S rRNA + 4 S-adenosyl-L-homocysteine + 4 H(+). In terms of biological role, specifically dimethylates two adjacent adenosines (A1518 and A1519) in the loop of a conserved hairpin near the 3'-end of 16S rRNA in the 30S particle. May play a critical role in biogenesis of 30S subunits. The protein is Ribosomal RNA small subunit methyltransferase A of Pseudomonas savastanoi pv. phaseolicola (strain 1448A / Race 6) (Pseudomonas syringae pv. phaseolicola (strain 1448A / Race 6)).